A 134-amino-acid chain; its full sequence is Small ribosomal subunit protein uS12 (134 aa).

The interval 1 to 30 is disordered; that stretch reads MPTINQLVKHGREKVKEKSKSPALQGHPQK. Residue Asp89 is modified to 3-methylthioaspartic acid. Residues 106–134 are disordered; the sequence is GVENRRQSRSKYGAKRPKAGAAAGAKGKK. A compositionally biased stretch (basic residues) spans 112–123; it reads QSRSKYGAKRPK. The span at 124 to 134 shows a compositional bias: low complexity; sequence AGAAAGAKGKK.

This sequence belongs to the universal ribosomal protein uS12 family. In terms of assembly, part of the 30S ribosomal subunit. Contacts proteins S8 and S17. May interact with IF1 in the 30S initiation complex.

Its function is as follows. With S4 and S5 plays an important role in translational accuracy. In terms of biological role, interacts with and stabilizes bases of the 16S rRNA that are involved in tRNA selection in the A site and with the mRNA backbone. Located at the interface of the 30S and 50S subunits, it traverses the body of the 30S subunit contacting proteins on the other side and probably holding the rRNA structure together. The combined cluster of proteins S8, S12 and S17 appears to hold together the shoulder and platform of the 30S subunit. This is Small ribosomal subunit protein uS12 from Fervidobacterium nodosum (strain ATCC 35602 / DSM 5306 / Rt17-B1).